A 357-amino-acid chain; its full sequence is Fulicin peptides (357 aa).

Positions 1–17 (MQPTVLLILMTSCLTYQ) are cleaved as a signal peptide. The propeptide occupies 18–119 (VIADKPKGNH…VDGSQGHLEP (102 aa)). At N123 the chain carries D-asparagine. V126 is subject to Valine amide. Positions 130-194 (NTLPEEAGSF…YNTMNEDEAS (65 aa)) are excised as a propeptide. Residues V201 and V209 each carry the valine amide modification. Leucine amide is present on residues L217 and L226. I233 and I242 each carry isoleucine amide. 2 positions are modified to valine amide: V250 and V259. Residues 263 to 298 (NQGVFTVSPSSTKISFDDNYLPYLSSVDAGDLSDVN) constitute a propeptide that is removed on maturation. L305 is subject to Leucine amide. A propeptide spanning residues 311–357 (TAEQDETSQRSNERLVALLQNTGFRKRLSRMLQNQRLVEHYPEFIGK) is cleaved from the precursor.

As to expression, found in central ganglia and the ventricles and atria of the heart.

Potentiates tetanic contraction of the penis retractor muscle at very low concentrations, and also shows modulatory actions on the activity of the buccal and ventricular muscles and the central ganglionic neurons. This is Fulicin peptides from Lissachatina fulica (Giant African land snail).